A 340-amino-acid chain; its full sequence is Coproporphyrin III ferrochelatase (340 aa).

Fe-coproporphyrin III is bound by residues Ser52 and Tyr121. His177 and Glu260 together coordinate Fe(2+).

It belongs to the ferrochelatase family.

The protein localises to the cytoplasm. It catalyses the reaction Fe-coproporphyrin III + 2 H(+) = coproporphyrin III + Fe(2+). It functions in the pathway porphyrin-containing compound metabolism; protoheme biosynthesis. In terms of biological role, involved in coproporphyrin-dependent heme b biosynthesis. Catalyzes the insertion of ferrous iron into coproporphyrin III to form Fe-coproporphyrin III. In Mycobacteroides abscessus (strain ATCC 19977 / DSM 44196 / CCUG 20993 / CIP 104536 / JCM 13569 / NCTC 13031 / TMC 1543 / L948) (Mycobacterium abscessus), this protein is Coproporphyrin III ferrochelatase.